A 241-amino-acid polypeptide reads, in one-letter code: Uridylate kinase (241 aa).

Lys15–Gly18 is an ATP binding site. The interval Gly23 to Gly28 is involved in allosteric activation by GTP. Gly57 serves as a coordination point for UMP. The ATP site is built by Gly58 and Arg62. Residues Asp77 and Thr138–Thr145 contribute to the UMP site. ATP contacts are provided by Thr165, Phe171, and Asp174.

The protein belongs to the UMP kinase family. Homohexamer.

The protein localises to the cytoplasm. The catalysed reaction is UMP + ATP = UDP + ADP. The protein operates within pyrimidine metabolism; CTP biosynthesis via de novo pathway; UDP from UMP (UMPK route): step 1/1. Allosterically activated by GTP. Inhibited by UTP. Its function is as follows. Catalyzes the reversible phosphorylation of UMP to UDP. The chain is Uridylate kinase from Klebsiella pneumoniae subsp. pneumoniae (strain ATCC 700721 / MGH 78578).